The chain runs to 455 residues: Probable glycine dehydrogenase (decarboxylating) subunit 1 (455 aa).

It belongs to the GcvP family. N-terminal subunit subfamily. The glycine cleavage system is composed of four proteins: P, T, L and H. In this organism, the P 'protein' is a heterodimer of two subunits.

It catalyses the reaction N(6)-[(R)-lipoyl]-L-lysyl-[glycine-cleavage complex H protein] + glycine + H(+) = N(6)-[(R)-S(8)-aminomethyldihydrolipoyl]-L-lysyl-[glycine-cleavage complex H protein] + CO2. The glycine cleavage system catalyzes the degradation of glycine. The P protein binds the alpha-amino group of glycine through its pyridoxal phosphate cofactor; CO(2) is released and the remaining methylamine moiety is then transferred to the lipoamide cofactor of the H protein. In Francisella tularensis subsp. holarctica (strain LVS), this protein is Probable glycine dehydrogenase (decarboxylating) subunit 1.